The chain runs to 793 residues: Potassium transporter 18 (793 aa).

The Cytoplasmic portion of the chain corresponds to 1–53 (METRTNEYSRKGAMWELERNLDQPMDAEAGRLRNMYREKTYPTILLLRLAFQS). The chain crosses the membrane as a helical span at residues 54–74 (LGVVFGDLGTSPLYVFYNIFP). The Extracellular portion of the chain corresponds to 75 to 86 (HGIEDTEQVIGA). A helical transmembrane segment spans residues 87 to 107 (LSLIIYSLTLIPLVKYVFIVL). Over 108-172 (RANDNGQGGT…WLEGHQFRKN (65 aa)) the chain is Cytoplasmic. Residues 173–193 (LILILVLFGTCMAVGDGILTP) form a helical membrane-spanning segment. Over 194-214 (AISVLSATGGIQVEEGRMRND) the chain is Extracellular. The chain crosses the membrane as a helical span at residues 215 to 235 (VVVIISVLILIGLFSMQHYGT). Over 236–237 (DK) the chain is Cytoplasmic. Residues 238 to 258 (VSWLFAPIVFVWFILIGILGA) traverse the membrane as a helical segment. At 259–287 (VNICKYDHSVLKAFNPVYVYRYFKRGKTS) the chain is on the extracellular side. A helical transmembrane segment spans residues 288–308 (WTSLGGIMLSITGTEALFADL). Position 309 (Ser-309) is a topological domain, cytoplasmic. A helical transmembrane segment spans residues 310–330 (YFPVQAIQIAFTVVVFPCLLL). Over 331-351 (QYTGQAAFIAANTNQVSHAFY) the chain is Extracellular. Residues 352 to 372 (ISLPAPILWPAFAVATAAAIV) form a helical membrane-spanning segment. The Cytoplasmic segment spans residues 373–409 (ASQATISATYSIIKQALALGCFPRVKIIHTSKKYLGQ). Residues 410–430 (IYSPDINWILMVFCIAVTAGF) form a helical membrane-spanning segment. Over 431–442 (KNQSQIANAYGT) the chain is Extracellular. N-linked (GlcNAc...) asparagine glycosylation is present at Asn-432. A helical transmembrane segment spans residues 443 to 463 (AVIMVMLVTTFLMIPIMLLVW). Residues 464-468 (RSHWT) lie on the Cytoplasmic side of the membrane. Residues 469–489 (LVVAFTVLSLLVEIPYFSAVV) form a helical membrane-spanning segment. Residues 490 to 494 (RKIDQ) lie on the Extracellular side of the membrane. The helical transmembrane segment at 495–515 (GGWVPLVFAAGFMIIMYVWHY) threads the bilayer. Residues 516-793 (GTLKRYEFEM…MLNVGQVFYV (278 aa)) lie on the Cytoplasmic side of the membrane.

Belongs to the HAK/KUP transporter (TC 2.A.72.3) family.

It is found in the membrane. Its function is as follows. High-affinity potassium transporter. The polypeptide is Potassium transporter 18 (HAK18) (Oryza sativa subsp. japonica (Rice)).